The chain runs to 218 residues: MVTGISEENDDEETFSAVHSSTPSINSQSYAIPITEEMSSSFHDSISTTSNSSGSFDSDGSNVSBVVEQNEMDNESNVDEDLFLDNDIPQSSNLLPTDAQDPGPIFDVSRYIFDSLKQSIDSADFSEALSLQTKTSAVINSKSLELKQYIDEMKSRLTQLQEKFENGEATSKKIKRDLETSRKNIDYLNAALRVDFPIEFNQAREKILERRLNEDHDC.

The interval 1-62 is disordered; it reads MVTGISEEND…SGSFDSDGSN (62 aa). A compositionally biased stretch (polar residues) spans 17–30; it reads AVHSSTPSINSQSY. Residues 39-62 are compositionally biased toward low complexity; that stretch reads SSSFHDSISTTSNSSGSFDSDGSN. A coiled-coil region spans residues 142-192; the sequence is KSLELKQYIDEMKSRLTQLQEKFENGEATSKKIKRDLETSRKNIDYLNAAL.

This sequence belongs to the KXD1 family. As to quaternary structure, component of the biogenesis of lysosome-related organelles complex-1 (BLOC-1) composed of at least BLI1, BLS1, CNL1, KXD1, SNN1 and VAB2.

It localises to the endosome. In terms of biological role, component of the biogenesis of lysosome-related organelles complex-1 (BLOC-1) involved in endosomal cargo sorting. This Saccharomyces cerevisiae (strain FostersB) (Baker's yeast) protein is Biogenesis of lysosome-related organelles complex 1 subunit KXD1 (KXD1).